The sequence spans 342 residues: Dihydroorotase (342 aa).

Zn(2+) is bound by residues histidine 13 and histidine 15. Residues 15 to 17 (HLR) and asparagine 41 contribute to the substrate site. The Zn(2+) site is built by lysine 98, histidine 135, and histidine 173. N6-carboxylysine is present on lysine 98. Histidine 135 lines the substrate pocket. Leucine 218 provides a ligand contact to substrate. Aspartate 246 is a binding site for Zn(2+). Residue aspartate 246 is part of the active site. Substrate contacts are provided by histidine 250 and alanine 262.

The protein belongs to the metallo-dependent hydrolases superfamily. DHOase family. Class II DHOase subfamily. Homodimer. Requires Zn(2+) as cofactor.

It carries out the reaction (S)-dihydroorotate + H2O = N-carbamoyl-L-aspartate + H(+). Its pathway is pyrimidine metabolism; UMP biosynthesis via de novo pathway; (S)-dihydroorotate from bicarbonate: step 3/3. Functionally, catalyzes the reversible cyclization of carbamoyl aspartate to dihydroorotate. This Aliivibrio fischeri (strain MJ11) (Vibrio fischeri) protein is Dihydroorotase.